Here is a 1203-residue protein sequence, read N- to C-terminus: Chromosome partition protein Smc (1203 aa).

ATP is bound at residue 32–39 (PNGSGKSN). 3 coiled-coil regions span residues 167–203 (ILKY…RQLK), 250–288 (MMRR…SVQQ), and 327–497 (DVLE…LERK). Positions 511–622 (GLLGSIAKLV…VVNYLAEALG (112 aa)) constitute an SMC hinge domain. 3 coiled-coil regions span residues 657–689 (EVTS…ALSE), 720–765 (RLGQ…NVEQ), and 976–1030 (YDRA…RKDL).

Belongs to the SMC family. As to quaternary structure, homodimer.

Its subcellular location is the cytoplasm. In terms of biological role, required for chromosome condensation and partitioning. The chain is Chromosome partition protein Smc from Mycobacterium leprae (strain TN).